A 177-amino-acid polypeptide reads, in one-letter code: MDNAPKTFKVDRHKQLVPLNPGLETNFVCSFEIKSLDGKPFQTTIVEQGQIKPTQYREVDDGFISGQLEGDGTPRSYFLVLRAQEPCECTVKIVLSPKQQVQPHQQTHQQSQQTHNKTVANSGDPPPPPPSQPNKFLKPKWIVGMVIGVVVLYLLYRYRAQLMDKLNLGSKTPFSKN.

The segment covering 100–115 has biased composition (low complexity); that stretch reads QVQPHQQTHQQSQQTH. Positions 100–135 are disordered; sequence QVQPHQQTHQQSQQTHNKTVANSGDPPPPPPSQPNK. Residues 141 to 158 traverse the membrane as a helical segment; the sequence is WIVGMVIGVVVLYLLYRY.

The protein localises to the membrane. This is an uncharacterized protein from Aedes vexans (Inland floodwater mosquito).